A 297-amino-acid polypeptide reads, in one-letter code: N-acetylmuramic acid 6-phosphate etherase (297 aa).

An SIS domain is found at A55–K218. The active-site Proton donor is the E83. Residue E114 is part of the active site.

This sequence belongs to the GCKR-like family. MurNAc-6-P etherase subfamily. As to quaternary structure, homodimer.

It catalyses the reaction N-acetyl-D-muramate 6-phosphate + H2O = N-acetyl-D-glucosamine 6-phosphate + (R)-lactate. It functions in the pathway amino-sugar metabolism; 1,6-anhydro-N-acetylmuramate degradation. It participates in amino-sugar metabolism; N-acetylmuramate degradation. The protein operates within cell wall biogenesis; peptidoglycan recycling. Specifically catalyzes the cleavage of the D-lactyl ether substituent of MurNAc 6-phosphate, producing GlcNAc 6-phosphate and D-lactate. Together with AnmK, is also required for the utilization of anhydro-N-acetylmuramic acid (anhMurNAc) either imported from the medium or derived from its own cell wall murein, and thus plays a role in cell wall recycling. This is N-acetylmuramic acid 6-phosphate etherase from Salmonella paratyphi A (strain ATCC 9150 / SARB42).